We begin with the raw amino-acid sequence, 20 residues long: DELTA-actitoxin-Afr1b (20 aa).

The protein belongs to the actinoporin family. Sea anemone subfamily. Octamer or nonamer in membranes. Monomer in the soluble state.

The protein localises to the secreted. The protein resides in the nematocyst. It is found in the target cell membrane. Its function is as follows. Pore-forming toxin (PFT) that consists of a crown-shaped octamer or nonamer that forms cation-selective hydrophilic pores of about 1.5 nm (inside) and 13 nm (outside) and causes cytolysis. It causes cardiac stimulation. Also causes hemolysis (HC(50)=0.4 nM). Interestingly, the Phe-16 is crucial for hemolysis. Pore formation is a multi-step process that involves specific recognition of membrane sphingomyelin (but neither cholesterol nor phosphatidylcholine) using aromatic rich region and adjacent phosphocholine (POC) binding site, firm binding to the membrane (mainly driven by hydrophobic interactions) accompanied by the transfer of the N-terminal region to the lipid-water interface and finally pore formation after oligomerization of monomers. It is probable that a dimeric form is an assembly intermediate before the complete oligomerization. The formation of stable pores occurs only in vesicles composed of DOPC/SM (there is no oligomerization when the PFT is treated with vesicles of DOPC or SM alone). The transmembrane pore displays 8 lateral perforations, one at each subunit-subunit interface, partially occupied by the acyl-chain region of a bridging lipid. Each pore contains 24 lipid molecules, firmly bound to each subunit, that is, 3 lipids (L1, L2, L3, L4 and/or L5) are associated to each subunit. Lipid L1 bridges 2 subunits, whereas lipids L2 and L3 bind to sites at single subunit. The sequence is that of DELTA-actitoxin-Afr1b from Actinia fragacea (Strawberry anemone).